We begin with the raw amino-acid sequence, 294 residues long: 4-hydroxy-tetrahydrodipicolinate synthase (294 aa).

S47 lines the pyruvate pocket. The active-site Proton donor/acceptor is Y135. Residue K163 is the Schiff-base intermediate with substrate of the active site. Pyruvate is bound at residue I205.

It belongs to the DapA family. As to quaternary structure, homotetramer; dimer of dimers.

It is found in the cytoplasm. The catalysed reaction is L-aspartate 4-semialdehyde + pyruvate = (2S,4S)-4-hydroxy-2,3,4,5-tetrahydrodipicolinate + H2O + H(+). The protein operates within amino-acid biosynthesis; L-lysine biosynthesis via DAP pathway; (S)-tetrahydrodipicolinate from L-aspartate: step 3/4. Its function is as follows. Catalyzes the condensation of (S)-aspartate-beta-semialdehyde [(S)-ASA] and pyruvate to 4-hydroxy-tetrahydrodipicolinate (HTPA). The protein is 4-hydroxy-tetrahydrodipicolinate synthase of Ralstonia nicotianae (strain ATCC BAA-1114 / GMI1000) (Ralstonia solanacearum).